Consider the following 304-residue polypeptide: Non-specific ribonucleoside hydrolase RihC (304 aa).

Residue His233 is part of the active site.

Belongs to the IUNH family. RihC subfamily.

Hydrolyzes both purine and pyrimidine ribonucleosides with a broad-substrate specificity. This is Non-specific ribonucleoside hydrolase RihC from Escherichia coli O45:K1 (strain S88 / ExPEC).